A 116-amino-acid chain; its full sequence is Alpha-amylase inhibitor 5 (116 aa).

5 disulfides stabilise this stretch: Cys4–Cys55, Cys18–Cys44, Cys27–Cys77, Cys45–Cys95, and Cys57–Cys106.

The protein belongs to the protease inhibitor I6 (cereal trypsin/alpha-amylase inhibitor) family.

Its subcellular location is the secreted. Its function is as follows. Alpha-amylase inhibitor. The protein is Alpha-amylase inhibitor 5 of Sorghum bicolor (Sorghum).